Reading from the N-terminus, the 356-residue chain is Pyruvate dehydrogenase E1 component subunit beta, mitochondrial (356 aa).

The transit peptide at 1-25 (MLSSILKKIQPSLLVNFRIITRTYA) directs the protein to the mitochondrion. Glutamate 85 is a thiamine diphosphate binding site. Isoleucine 138, alanine 186, isoleucine 187, aspartate 189, and asparagine 191 together coordinate K(+).

Tetramer of 2 alpha and 2 beta subunits. It depends on thiamine diphosphate as a cofactor.

It localises to the mitochondrion matrix. It carries out the reaction N(6)-[(R)-lipoyl]-L-lysyl-[protein] + pyruvate + H(+) = N(6)-[(R)-S(8)-acetyldihydrolipoyl]-L-lysyl-[protein] + CO2. The pyruvate dehydrogenase complex catalyzes the overall conversion of pyruvate to acetyl-CoA and CO(2). It contains multiple copies of three enzymatic components: pyruvate dehydrogenase (E1), dihydrolipoamide acetyltransferase (E2) and lipoamide dehydrogenase (E3). The polypeptide is Pyruvate dehydrogenase E1 component subunit beta, mitochondrial (pdhB) (Dictyostelium discoideum (Social amoeba)).